Here is an 89-residue protein sequence, read N- to C-terminus: Ribonuclease P protein component 1 (89 aa).

The protein belongs to the eukaryotic/archaeal RNase P protein component 1 family. In terms of assembly, consists of a catalytic RNA component and at least 4-5 protein subunits.

It localises to the cytoplasm. The catalysed reaction is Endonucleolytic cleavage of RNA, removing 5'-extranucleotides from tRNA precursor.. Functionally, part of ribonuclease P, a protein complex that generates mature tRNA molecules by cleaving their 5'-ends. This chain is Ribonuclease P protein component 1, found in Thermoplasma volcanium (strain ATCC 51530 / DSM 4299 / JCM 9571 / NBRC 15438 / GSS1).